A 217-amino-acid polypeptide reads, in one-letter code: Protein canopy 4 (217 aa).

The first 27 residues, 1-27 (MEMFTVFLFYMFSLVLANQEERLPNKC), serve as a signal peptide directing secretion. Disulfide bonds link C27–C185, C30–C173, and C83–C145. A disordered region spans residues 194–217 (MGMKGSEEESEGKDGKETHDAGEL). Over residues 205 to 217 (GKDGKETHDAGEL) the composition is skewed to basic and acidic residues.

The protein belongs to the canopy family.

The protein localises to the secreted. This chain is Protein canopy 4 (cnpy4), found in Danio rerio (Zebrafish).